A 196-amino-acid chain; its full sequence is Adenylate kinase (196 aa).

9 to 17 (GIPGVGKST) contributes to the ATP binding site.

The protein belongs to the archaeal adenylate kinase family.

The protein resides in the cytoplasm. The enzyme catalyses AMP + ATP = 2 ADP. In Thermococcus sibiricus (strain DSM 12597 / MM 739), this protein is Adenylate kinase.